A 240-amino-acid polypeptide reads, in one-letter code: 4-hydroxy-tetrahydrodipicolinate reductase (240 aa).

NAD(+) contacts are provided by residues 79 to 81 (ATT) and 103 to 106 (SANM). Catalysis depends on His135, which acts as the Proton donor/acceptor. Position 136 (His136) interacts with (S)-2,3,4,5-tetrahydrodipicolinate. Lys139 serves as the catalytic Proton donor. A (S)-2,3,4,5-tetrahydrodipicolinate-binding site is contributed by 145–146 (GT).

Belongs to the DapB family.

It localises to the cytoplasm. The catalysed reaction is (S)-2,3,4,5-tetrahydrodipicolinate + NAD(+) + H2O = (2S,4S)-4-hydroxy-2,3,4,5-tetrahydrodipicolinate + NADH + H(+). The enzyme catalyses (S)-2,3,4,5-tetrahydrodipicolinate + NADP(+) + H2O = (2S,4S)-4-hydroxy-2,3,4,5-tetrahydrodipicolinate + NADPH + H(+). The protein operates within amino-acid biosynthesis; L-lysine biosynthesis via DAP pathway; (S)-tetrahydrodipicolinate from L-aspartate: step 4/4. In terms of biological role, catalyzes the conversion of 4-hydroxy-tetrahydrodipicolinate (HTPA) to tetrahydrodipicolinate. This is 4-hydroxy-tetrahydrodipicolinate reductase from Staphylococcus saprophyticus subsp. saprophyticus (strain ATCC 15305 / DSM 20229 / NCIMB 8711 / NCTC 7292 / S-41).